We begin with the raw amino-acid sequence, 178 residues long: MSRVGKKPINIPKGVEVSVQGSKILFKGAKEQKELETYGRVQIHLQDGTLSFACVDSQAQSRAYWGTYRALANNIIVGLSQGFTKVLEINGVGYKANISGKNLEMALGFSHPVIYPIPAGVEMSVDKNTITIKGADKQQIGQIAAEIRKFRPPEPYKGKGIKYSDEMIVRKAGKTSKK.

Belongs to the universal ribosomal protein uL6 family. As to quaternary structure, part of the 50S ribosomal subunit.

This protein binds to the 23S rRNA, and is important in its secondary structure. It is located near the subunit interface in the base of the L7/L12 stalk, and near the tRNA binding site of the peptidyltransferase center. The protein is Large ribosomal subunit protein uL6 of Helicobacter hepaticus (strain ATCC 51449 / 3B1).